Here is a 332-residue protein sequence, read N- to C-terminus: Transcription initiation factor IIB 2 (332 aa).

Over residues Met-1–Tyr-10 the composition is skewed to polar residues. A disordered region spans residues Met-1–Val-36. Residues Ala-14–Thr-29 are compositionally biased toward basic and acidic residues. A TFIIB-type zinc finger spans residues Glu-33–Glu-63. Zn(2+) is bound by residues Cys-37, Cys-40, Cys-55, and Cys-58. The interval Asp-77–Trp-106 is disordered. 2 repeat units span residues Gly-149–Leu-232 and Gln-243–Glu-324.

Belongs to the TFIIB family.

Its function is as follows. Stabilizes TBP binding to an archaeal box-A promoter. Also responsible for recruiting RNA polymerase II to the pre-initiation complex (DNA-TBP-TFIIB). This Haloferax volcanii (strain ATCC 29605 / DSM 3757 / JCM 8879 / NBRC 14742 / NCIMB 2012 / VKM B-1768 / DS2) (Halobacterium volcanii) protein is Transcription initiation factor IIB 2.